A 373-amino-acid chain; its full sequence is 4-hydroxy-3-methylbut-2-en-1-yl diphosphate synthase (flavodoxin) (373 aa).

[4Fe-4S] cluster-binding residues include C270, C273, C305, and E312.

This sequence belongs to the IspG family. Requires [4Fe-4S] cluster as cofactor.

It carries out the reaction (2E)-4-hydroxy-3-methylbut-2-enyl diphosphate + oxidized [flavodoxin] + H2O + 2 H(+) = 2-C-methyl-D-erythritol 2,4-cyclic diphosphate + reduced [flavodoxin]. It functions in the pathway isoprenoid biosynthesis; isopentenyl diphosphate biosynthesis via DXP pathway; isopentenyl diphosphate from 1-deoxy-D-xylulose 5-phosphate: step 5/6. Its function is as follows. Converts 2C-methyl-D-erythritol 2,4-cyclodiphosphate (ME-2,4cPP) into 1-hydroxy-2-methyl-2-(E)-butenyl 4-diphosphate. This chain is 4-hydroxy-3-methylbut-2-en-1-yl diphosphate synthase (flavodoxin), found in Pectobacterium carotovorum subsp. carotovorum (strain PC1).